Reading from the N-terminus, the 142-residue chain is uncharacterized protein (142 aa).

The Peptidase C39 domain maps to 18–137 (QSSGYSCGPA…KIFTGNVLVV (120 aa)).

This is an uncharacterized protein from Methanothermobacter marburgensis (strain ATCC BAA-927 / DSM 2133 / JCM 14651 / NBRC 100331 / OCM 82 / Marburg) (Methanobacterium thermoautotrophicum).